The sequence spans 391 residues: Elongation factor Tu (391 aa).

The 192-residue stretch at 10-201 (KPHVNIGTIG…AVDEYIPTPA (192 aa)) folds into the tr-type G domain. The segment at 19–26 (GHVDHGKT) is G1. 19–26 (GHVDHGKT) is a GTP binding site. Position 26 (T26) interacts with Mg(2+). The segment at 55–59 (GITIS) is G2. The G3 stretch occupies residues 76-79 (DCPG). GTP-binding positions include 76 to 80 (DCPGH) and 131 to 134 (NKVD). Residues 131–134 (NKVD) are G4. Positions 169 to 171 (SAL) are G5.

Belongs to the TRAFAC class translation factor GTPase superfamily. Classic translation factor GTPase family. EF-Tu/EF-1A subfamily. As to quaternary structure, monomer.

It localises to the cytoplasm. The enzyme catalyses GTP + H2O = GDP + phosphate + H(+). In terms of biological role, GTP hydrolase that promotes the GTP-dependent binding of aminoacyl-tRNA to the A-site of ribosomes during protein biosynthesis. This is Elongation factor Tu from Ruegeria pomeroyi (strain ATCC 700808 / DSM 15171 / DSS-3) (Silicibacter pomeroyi).